A 292-amino-acid chain; its full sequence is 4-hydroxy-tetrahydrodipicolinate synthase (292 aa).

Thr-45 contributes to the pyruvate binding site. The Proton donor/acceptor role is filled by Tyr-133. Residue Lys-161 is the Schiff-base intermediate with substrate of the active site. Ile-203 serves as a coordination point for pyruvate.

Belongs to the DapA family. In terms of assembly, homotetramer; dimer of dimers.

Its subcellular location is the cytoplasm. It carries out the reaction L-aspartate 4-semialdehyde + pyruvate = (2S,4S)-4-hydroxy-2,3,4,5-tetrahydrodipicolinate + H2O + H(+). It functions in the pathway amino-acid biosynthesis; L-lysine biosynthesis via DAP pathway; (S)-tetrahydrodipicolinate from L-aspartate: step 3/4. Its function is as follows. Catalyzes the condensation of (S)-aspartate-beta-semialdehyde [(S)-ASA] and pyruvate to 4-hydroxy-tetrahydrodipicolinate (HTPA). The chain is 4-hydroxy-tetrahydrodipicolinate synthase from Vibrio cholerae serotype O1 (strain ATCC 39541 / Classical Ogawa 395 / O395).